The following is a 272-amino-acid chain: MDKDFMKINVTPWESVEIARHKDRPSGQYYIETIFKDFIEFHGDRNFGDDQAIIGGIASINDINVTVIAITKGSNTSEYIKRNFGMPNPEGYRKALRLMKQAEKFKRPIICFIDTMGAFPGMGAEERGQGQAIANNLFELSRLKTPIISIITGEGESGGALALAVADKIFMLEHSIYSVLSPEGFASILWKDPSRVKEAAAVAKITAKDLKGFDIIDGIVKEPRGGAHKNPVKTAEVLKKTIVDSLLELKEKDLNELIDNRYNKFRDMGNFY.

A CoA carboxyltransferase C-terminal domain is found at 1-248 (MDKDFMKINV…KKTIVDSLLE (248 aa)).

Belongs to the AccA family. In terms of assembly, acetyl-CoA carboxylase is a heterohexamer composed of biotin carboxyl carrier protein (AccB), biotin carboxylase (AccC) and two subunits each of ACCase subunit alpha (AccA) and ACCase subunit beta (AccD).

It localises to the cytoplasm. It carries out the reaction N(6)-carboxybiotinyl-L-lysyl-[protein] + acetyl-CoA = N(6)-biotinyl-L-lysyl-[protein] + malonyl-CoA. It participates in lipid metabolism; malonyl-CoA biosynthesis; malonyl-CoA from acetyl-CoA: step 1/1. Its function is as follows. Component of the acetyl coenzyme A carboxylase (ACC) complex. First, biotin carboxylase catalyzes the carboxylation of biotin on its carrier protein (BCCP) and then the CO(2) group is transferred by the carboxyltransferase to acetyl-CoA to form malonyl-CoA. The chain is Acetyl-coenzyme A carboxylase carboxyl transferase subunit alpha from Clostridium beijerinckii (strain ATCC 51743 / NCIMB 8052) (Clostridium acetobutylicum).